Here is a 108-residue protein sequence, read N- to C-terminus: Parvalbumin beta (108 aa).

EF-hand domains follow at residues 38–73 (KPTDQVKKVFDILDQDKSGYIEEDELQLFLKNFCSS) and 77–108 (LSNAETKAFLFAGDSDGDGKIGVDEFQALVRS). 11 residues coordinate Ca(2+): D51, D53, S55, Y57, E59, E62, D90, D92, D94, K96, and E101.

This sequence belongs to the parvalbumin family.

Its function is as follows. In muscle, parvalbumin is thought to be involved in relaxation after contraction. It binds two calcium ions. The polypeptide is Parvalbumin beta (Amphiuma means (Salamander)).